The following is a 75-amino-acid chain: MMNKKRRKKKRVCQFCADKNAKIDYKSTQRLQKYITERGKILPRRISGTCAKHQRELTVAIKRARNIALLPYTLD.

This sequence belongs to the bacterial ribosomal protein bS18 family. Part of the 30S ribosomal subunit. Forms a tight heterodimer with protein bS6.

Its function is as follows. Binds as a heterodimer with protein bS6 to the central domain of the 16S rRNA, where it helps stabilize the platform of the 30S subunit. This is Small ribosomal subunit protein bS18 from Clostridioides difficile (strain 630) (Peptoclostridium difficile).